A 283-amino-acid polypeptide reads, in one-letter code: Elongation factor Ts (283 aa).

An involved in Mg(2+) ion dislocation from EF-Tu region spans residues T82 to V85.

Belongs to the EF-Ts family.

Its subcellular location is the cytoplasm. Its function is as follows. Associates with the EF-Tu.GDP complex and induces the exchange of GDP to GTP. It remains bound to the aminoacyl-tRNA.EF-Tu.GTP complex up to the GTP hydrolysis stage on the ribosome. The polypeptide is Elongation factor Ts (Photorhabdus laumondii subsp. laumondii (strain DSM 15139 / CIP 105565 / TT01) (Photorhabdus luminescens subsp. laumondii)).